We begin with the raw amino-acid sequence, 476 residues long: PRAME family member 5 (476 aa).

One copy of the LRR 1; degenerate repeat lies at 97 to 124 (RWKLQVLDLQDVCENFWMVWSEAMAHGC). The LRR 2; degenerate repeat unit spans residues 179–203 (HLCCKKLKILGMPFRNIRSILKMVN). Residues 204 to 230 (LDCIQEVEVNCKWVLPILTQFTPYLGH) form an LRR 3; degenerate repeat. One copy of the LRR 4; degenerate repeat lies at 231 to 266 (MRNLQKLVLSHMDVSRYVSPEQKKEIVTQFTTQFLK). 5 LRR repeats span residues 267–292 (LCCLQKLSMNSVSFLEGHLDQLLSCL), 293–324 (KTSLKVLTITNCVLLESDLKHLSQCPSISQLK), 325–345 (TLDLSGIRLTNYSLVPLQILL), 349–376 (AATLEYLDLDDCGIIDSQVNAILPALSR), and 377–401 (CFELNTFSFCGNPISMATLENLLSH).

Belongs to the PRAME family.

The protein is PRAME family member 5 of Homo sapiens (Human).